A 255-amino-acid chain; its full sequence is Pyrroloquinoline-quinone synthase (255 aa).

Belongs to the PqqC family.

The catalysed reaction is 6-(2-amino-2-carboxyethyl)-7,8-dioxo-1,2,3,4,7,8-hexahydroquinoline-2,4-dicarboxylate + 3 O2 = pyrroloquinoline quinone + 2 H2O2 + 2 H2O + H(+). The protein operates within cofactor biosynthesis; pyrroloquinoline quinone biosynthesis. Ring cyclization and eight-electron oxidation of 3a-(2-amino-2-carboxyethyl)-4,5-dioxo-4,5,6,7,8,9-hexahydroquinoline-7,9-dicarboxylic-acid to PQQ. This Granulibacter bethesdensis (strain ATCC BAA-1260 / CGDNIH1) protein is Pyrroloquinoline-quinone synthase.